Reading from the N-terminus, the 352-residue chain is CMP-sialic acid transporter 4 (352 aa).

Over Met1–Lys51 the chain is Cytoplasmic. A helical membrane pass occupies residues Gly52–Ser72. At Lys73–Ser81 the chain is on the lumenal side. The helical transmembrane segment at Val82 to Thr102 threads the bilayer. The Cytoplasmic segment spans residues Arg103–Lys124. The helical transmembrane segment at Val125 to Ala145 threads the bilayer. Topologically, residues Tyr146–Lys174 are lumenal. A helical transmembrane segment spans residues Leu175 to Leu195. Topologically, residues Asn196–Trp210 are cytoplasmic. A helical membrane pass occupies residues Thr211–Ile231. Topologically, residues Lys232 to Asn238 are lumenal. Residues Ile239–Val259 traverse the membrane as a helical segment. Residues Ile260–Ser276 lie on the Cytoplasmic side of the membrane. Residues Phe277–Met297 traverse the membrane as a helical segment. Residues Lys298 to Met313 lie on the Lumenal side of the membrane. A helical membrane pass occupies residues Leu314–Leu334. At Gly335 to Arg352 the chain is on the cytoplasmic side.

This sequence belongs to the nucleotide-sugar transporter family. CMP-Sialate:CMP antiporter (TC 2.A.7.12) subfamily.

The protein localises to the golgi apparatus membrane. Its function is as follows. Sugar transporter involved in the transport of CMP-sialic acid from the cytoplasm into the Golgi. Essential protein. The sequence is that of CMP-sialic acid transporter 4 from Arabidopsis thaliana (Mouse-ear cress).